The primary structure comprises 338 residues: Glycerol-3-phosphate dehydrogenase [NAD(P)+] (338 aa).

Residues Trp11, Arg30, and Lys109 each coordinate NADPH. Positions 109, 143, and 145 each coordinate sn-glycerol 3-phosphate. Ala147 contacts NADPH. 5 residues coordinate sn-glycerol 3-phosphate: Lys198, Asp251, Ser261, Arg262, and Asn263. The active-site Proton acceptor is the Lys198. NADPH is bound at residue Arg262. Val286 and Glu288 together coordinate NADPH.

This sequence belongs to the NAD-dependent glycerol-3-phosphate dehydrogenase family.

It is found in the cytoplasm. It carries out the reaction sn-glycerol 3-phosphate + NAD(+) = dihydroxyacetone phosphate + NADH + H(+). The enzyme catalyses sn-glycerol 3-phosphate + NADP(+) = dihydroxyacetone phosphate + NADPH + H(+). The protein operates within membrane lipid metabolism; glycerophospholipid metabolism. Catalyzes the reduction of the glycolytic intermediate dihydroxyacetone phosphate (DHAP) to sn-glycerol 3-phosphate (G3P), the key precursor for phospholipid synthesis. The chain is Glycerol-3-phosphate dehydrogenase [NAD(P)+] from Cupriavidus necator (strain ATCC 17699 / DSM 428 / KCTC 22496 / NCIMB 10442 / H16 / Stanier 337) (Ralstonia eutropha).